Consider the following 313-residue polypeptide: MPIRIPDQLPASDVLRTENIFVMSETRAASQEIRPLRVLILNLMPKKIETETQFLRLLSNSPLQVNVELLRIDNRPSKNTPTEHLDTFYRQFEMVKGKNFDGLIITGAPLGLVQFEDVIYWDHLKTIMEWAKDHVTSTLYVCWAAQAGLKLLYDLPKKTRKEKLSGVYHHQIHNPFHPILRGFDDTFLAPHSRYADFSPHFLEEHTDLDILATSDVAGVYLATTKDKRNVFVTGHPEYDSHTLHNEYIRDLGEGMEPAIPVNYYPNNNPDNPPIASWRSHGHLLFLNWLNYCVYQQTPYDLDHFSEDAFTKDD.

Cys-142 serves as the catalytic Acyl-thioester intermediate. Lys-163 and Ser-192 together coordinate substrate. The active-site Proton acceptor is His-235. Glu-237 is a catalytic residue. A substrate-binding site is contributed by Arg-249.

This sequence belongs to the MetA family.

The protein resides in the cytoplasm. It carries out the reaction L-homoserine + succinyl-CoA = O-succinyl-L-homoserine + CoA. Its pathway is amino-acid biosynthesis; L-methionine biosynthesis via de novo pathway; O-succinyl-L-homoserine from L-homoserine: step 1/1. Transfers a succinyl group from succinyl-CoA to L-homoserine, forming succinyl-L-homoserine. In Vibrio parahaemolyticus serotype O3:K6 (strain RIMD 2210633), this protein is Homoserine O-succinyltransferase.